The chain runs to 229 residues: MPSLWDRFSSSSSSSSSSRTPAADRPPRSAWGSAAREEGLDRCASLESSDCESLDSSNSGFGPEEDSSYLDGVSLPDFELLSDPEDEHLCANLMQLLQESLSQARLGSRRPARLLMPSQLVSQVGKELLRLAYSEPCGLRGALLDVCVEQGKSCHSVAQLALDPSLVPTFQLTLVLRLDSRLWPKIQGLLSSANSSLVPGYSQSLTLSTGFRVIKKKLYSSEQLLIEEC.

A disordered region spans residues 1–68; sequence MPSLWDRFSS…SGFGPEEDSS (68 aa). Residues 9-18 are compositionally biased toward low complexity; it reads SSSSSSSSSS. At Ser-16 the chain carries Phosphoserine. Thr-20 carries the post-translational modification Phosphothreonine. Phosphoserine is present on Ser-118.

This sequence belongs to the DDIT4 family. Monomer. Interacts with BTRC. Identified in a complex with CUL4A, DDB1 and BTRC. Interacts with TXNIP; this inhibits the proteasomal degradation of DDIT4. Post-translationally, phosphorylated by GSK3B; this promotes proteasomal degradation. In terms of processing, polyubiquitinated by a DCX (DDB1-CUL4A-RBX1) E3 ubiquitin-protein ligase complex with BTRC as substrate-recognition component, leading to its proteasomal degradation. Ubiquitously expressed.

The protein localises to the mitochondrion. It localises to the cytoplasm. Its subcellular location is the cytosol. Its function is as follows. Regulates cell growth, proliferation and survival via inhibition of the activity of the mammalian target of rapamycin complex 1 (mTORC1). Inhibition of mTORC1 is mediated by a pathway that involves DDIT4/REDD1, AKT1, the TSC1-TSC2 complex and the GTPase RHEB. Plays an important role in responses to cellular energy levels and cellular stress, including responses to hypoxia and DNA damage. Regulates p53/TP53-mediated apoptosis in response to DNA damage via its effect on mTORC1 activity. Its role in the response to hypoxia depends on the cell type; it mediates mTORC1 inhibition in fibroblasts and thymocytes, but not in hepatocytes. Inhibits neuronal differentiation and neurite outgrowth mediated by NGF via its effect on mTORC1 activity. Required for normal neuron migration during embryonic brain development. Plays a role in neuronal cell death. Required for mTORC1-mediated defense against viral protein synthesis and virus replication. The chain is DNA damage-inducible transcript 4 protein (Ddit4) from Mus musculus (Mouse).